A 696-amino-acid polypeptide reads, in one-letter code: Ribonucleoside-diphosphate reductase subunit beta (696 aa).

D97, E127, and H130 together coordinate Fe cation. Residue Y134 is part of the active site. Fe cation is bound by residues E194 and E228. Residues 377 to 507 (DGTIDSKRNG…FVQALCALGG (131 aa)) form the DOD-type homing endonuclease domain. Residue H577 coordinates Fe cation.

It belongs to the ribonucleoside diphosphate reductase small chain family. As to quaternary structure, tetramer of two alpha and two beta subunits. The cofactor is Fe cation. In terms of processing, this protein undergoes a protein self splicing that involves a post-translational excision of the intervening region (intein) followed by peptide ligation.

The enzyme catalyses a 2'-deoxyribonucleoside 5'-diphosphate + [thioredoxin]-disulfide + H2O = a ribonucleoside 5'-diphosphate + [thioredoxin]-dithiol. In terms of biological role, provides the precursors necessary for DNA synthesis. Catalyzes the biosynthesis of deoxyribonucleotides from the corresponding ribonucleotides. In Aquifex aeolicus (strain VF5), this protein is Ribonucleoside-diphosphate reductase subunit beta (nrdB).